A 517-amino-acid polypeptide reads, in one-letter code: Alpha,alpha-trehalose-phosphate synthase [UDP-forming] 1 (517 aa).

D-glucose 6-phosphate-binding residues include tyrosine 98 and aspartate 152. Positions 288 and 293 each coordinate UDP. Arginine 288 and lysine 293 together coordinate UDP-alpha-D-glucose. Residue arginine 326 participates in D-glucose 6-phosphate binding. 387 to 395 (DGMNLVAYE) contacts UDP-alpha-D-glucose. UDP is bound at residue 391–395 (LVAYE). The tract at residues 486 to 517 (FHAKKASFSDNNSENGEPSNGVETPAQEQVAQ) is disordered. Polar residues predominate over residues 493 to 517 (FSDNNSENGEPSNGVETPAQEQVAQ).

This sequence belongs to the glycosyltransferase 20 family.

The enzyme catalyses D-glucose 6-phosphate + UDP-alpha-D-glucose = alpha,alpha-trehalose 6-phosphate + UDP + H(+). Its pathway is carbohydrate biosynthesis. Functionally, synthase catalytic subunit of the trehalose synthase complex that catalyzes the production of trehalose from glucose-6-phosphate and UDP-alpha-D-glucose in a two step process. This Aspergillus niger protein is Alpha,alpha-trehalose-phosphate synthase [UDP-forming] 1.